The primary structure comprises 610 residues: Protein mono-ADP-ribosyltransferase PARP6 (610 aa).

One can recognise a PARP catalytic domain in the interval 374–600 (EMTQGSYLEI…QDPKIQKEIM (227 aa)). Asp580 carries the post-translational modification ADP-ribosyl aspartic acid.

The protein belongs to the ARTD/PARP family. Post-translationally, auto-mono-ADP-ribosylated.

The catalysed reaction is L-aspartyl-[protein] + NAD(+) = 4-O-(ADP-D-ribosyl)-L-aspartyl-[protein] + nicotinamide. It carries out the reaction L-cysteinyl-[protein] + NAD(+) = S-(ADP-D-ribosyl)-L-cysteinyl-[protein] + nicotinamide + H(+). Mono-ADP-ribosyltransferase that mediates mono-ADP-ribosylation of target proteins. The chain is Protein mono-ADP-ribosyltransferase PARP6 from Pongo abelii (Sumatran orangutan).